The following is a 510-amino-acid chain: Alpha-L-arabinofuranosidase B (510 aa).

The first 24 residues, 1-24 (MTMSRSSRSSVLALALATGSLVAA), serve as a signal peptide directing secretion. The tract at residues 25–342 (GPCDIYSSGG…ADIVAAKYAT (318 aa)) is catalytic. Cystine bridges form between cysteine 27-cysteine 37, cysteine 87-cysteine 92, and cysteine 182-cysteine 183. Residue asparagine 89 is glycosylated (N-linked (GlcNAc...) asparagine). Aspartate 225 lines the substrate pocket. The Nucleophile role is filled by glutamate 227. Residues asparagine 228 and glycine 303 each coordinate substrate. Aspartate 304 acts as the Proton donor in catalysis. The ABD stretch occupies residues 343–510 (TSLISGPALT…VSWVVADGFA (168 aa)). Cysteine 412 and cysteine 450 are disulfide-bonded. Substrate contacts are provided by histidine 427, asparagine 429, phenylalanine 430, aspartate 446, histidine 475, glutamate 477, leucine 480, and aspartate 500.

The protein belongs to the glycosyl hydrolase 54 family.

It localises to the secreted. The enzyme catalyses Hydrolysis of terminal non-reducing alpha-L-arabinofuranoside residues in alpha-L-arabinosides.. It participates in glycan metabolism; L-arabinan degradation. Functionally, alpha-L-arabinofuranosidase involved in the degradation of arabinoxylan, a major component of plant hemicellulose. Able to hydrolyze 1,5-, 1,3- and 1,2-alpha-linkages not only in L-arabinofuranosyl oligosaccharides, but also in polysaccharides containing terminal non-reducing L-arabinofuranoses in side chains, like L-arabinan, arabinogalactan and arabinoxylan. This Emericella nidulans (strain FGSC A4 / ATCC 38163 / CBS 112.46 / NRRL 194 / M139) (Aspergillus nidulans) protein is Alpha-L-arabinofuranosidase B (abfB).